The following is a 329-amino-acid chain: Probable alpha-1,2-galactosyltransferase gmh1 (329 aa).

Over 1-14 (MLSFFTKNTLTKRK) the chain is Cytoplasmic. A helical; Signal-anchor for type II membrane protein transmembrane segment spans residues 15–35 (LIMLALAIVFTFFAFGLYFIP). Residues 36–329 (HDEISVFDFK…LWTKYKDKII (294 aa)) are Lumenal-facing. N-linked (GlcNAc...) asparagine glycosylation is found at N127 and N169.

It belongs to the glycosyltransferase 34 family.

The protein resides in the golgi apparatus membrane. In Schizosaccharomyces pombe (strain 972 / ATCC 24843) (Fission yeast), this protein is Probable alpha-1,2-galactosyltransferase gmh1 (gmh1).